The primary structure comprises 177 residues: R-phycoerythrin beta chain (177 aa).

Positions 50 and 61 each coordinate phycourobilin. Asn-72 carries the post-translational modification N4-methylasparagine. 2 residues coordinate (2R,3E)-phycoerythrobilin: Cys-82 and Cys-158.

This sequence belongs to the phycobiliprotein family. As to quaternary structure, heterodimer of an alpha and a beta chain. Post-translationally, contains two covalently linked phycoerythrobilin chromophores and one covalently linked phycourobilin chromophore.

Its subcellular location is the plastid. The protein localises to the chloroplast thylakoid membrane. Light-harvesting photosynthetic bile pigment-protein from the phycobiliprotein complex. The sequence is that of R-phycoerythrin beta chain (cpeB) from Pyropia haitanensis (Red seaweed).